The chain runs to 38 residues: Plastocyanin (38 aa).

Positions 1–38 constitute a Plastocyanin-like domain; the sequence is AQTVEVKMGADGGLLVFEPAKAGPHNVVFDEDNIPPGV. Histidine 25 is a Cu cation binding site.

Belongs to the plastocyanin family. Cu(2+) is required as a cofactor.

It is found in the plastid. It localises to the chloroplast thylakoid membrane. Its function is as follows. Participates in electron transfer between P700 and the cytochrome b6-f complex in photosystem I. The sequence is that of Plastocyanin (PETE) from Thalassiosira oceanica (Marine diatom).